The sequence spans 64 residues: Large ribosomal subunit protein bL35 (64 aa).

The span at 1–42 (MPKAKTHSGASKRFRRTGTGKIVRQKANRRHLLEHKPTKRTR) shows a compositional bias: basic residues. The interval 1–64 (MPKAKTHSGA…NSRINKLLNG (64 aa)) is disordered. Polar residues predominate over residues 48–58 (TTVSAADNSRI).

Belongs to the bacterial ribosomal protein bL35 family.

This is Large ribosomal subunit protein bL35 from Mycolicibacterium smegmatis (strain ATCC 700084 / mc(2)155) (Mycobacterium smegmatis).